Reading from the N-terminus, the 435-residue chain is Gamma-glutamyl phosphate reductase (435 aa).

It belongs to the gamma-glutamyl phosphate reductase family.

The protein resides in the cytoplasm. It catalyses the reaction L-glutamate 5-semialdehyde + phosphate + NADP(+) = L-glutamyl 5-phosphate + NADPH + H(+). Its pathway is amino-acid biosynthesis; L-proline biosynthesis; L-glutamate 5-semialdehyde from L-glutamate: step 2/2. In terms of biological role, catalyzes the NADPH-dependent reduction of L-glutamate 5-phosphate into L-glutamate 5-semialdehyde and phosphate. The product spontaneously undergoes cyclization to form 1-pyrroline-5-carboxylate. In Aquifex aeolicus (strain VF5), this protein is Gamma-glutamyl phosphate reductase.